The primary structure comprises 174 residues: B3 domain-containing protein At3g06220 (174 aa).

Positions 8-101 (PRFYTVFLSC…SYEVSIYGRG (94 aa)) form a DNA-binding region, TF-B3. Positions 114–174 (EISDESESDN…ISDASDSDYY (61 aa)) are disordered. 2 stretches are compositionally biased toward acidic residues: residues 139-150 (ENSDDTEGDNDS) and 164-174 (EISDASDSDYY).

It is found in the nucleus. In Arabidopsis thaliana (Mouse-ear cress), this protein is B3 domain-containing protein At3g06220.